The sequence spans 319 residues: Taste receptor type 2 member 30 (319 aa).

A topological domain (extracellular) is located at residue methionine 1. The chain crosses the membrane as a helical span at residues 2 to 22 (ITFLPIIFSILIVVIFVIGNF). Topologically, residues 23-46 (ANGFIALVNSIEWVKRQKISFADQ) are cytoplasmic. The helical transmembrane segment at 47–67 (ILIALAVSRVGLLWALLLHWY) threads the bilayer. Topologically, residues 68–86 (ATELNLAFYSVEVRITAYN) are extracellular. Residues 87–107 (VWAVTNHFSNWLATSLSMFYL) traverse the membrane as a helical segment. Residues 108–126 (LKIANFSNLIFLRIKRRVK) are Cytoplasmic-facing. Residues 127-147 (SVILVILLGPLLFLVCHLFVI) form a helical membrane-spanning segment. Topologically, residues 148–178 (NMNEIVWTKEYEGNLTWKIKLRNAVFLSNMT) are extracellular. Residues asparagine 161 and asparagine 176 are each glycosylated (N-linked (GlcNAc...) asparagine). The chain crosses the membrane as a helical span at residues 179-199 (LTMLANFVPLTLTLISFLLLI). Residues 200-229 (CSLCKHLKKMQLHGKGSQDPSTKVHIKALQ) lie on the Cytoplasmic side of the membrane. The chain crosses the membrane as a helical span at residues 230–250 (TVTCFLLLCAIYFLSMIISVY). The Extracellular portion of the chain corresponds to 251–259 (NFGRLEKKP). The helical transmembrane segment at 260–280 (VFMFCQAITFSYPSTHAFILI) threads the bilayer. The Cytoplasmic segment spans residues 281-319 (WGNKKLKQIFLSVLWHVRYWVKDRSLRLHRFTRAALCKG).

This sequence belongs to the G-protein coupled receptor T2R family.

The protein localises to the membrane. Receptor that may play a role in the perception of bitterness and is gustducin-linked. May play a role in sensing the chemical composition of the gastrointestinal content. The activity of this receptor may stimulate alpha gustducin, mediate PLC-beta-2 activation and lead to the gating of TRPM5. The polypeptide is Taste receptor type 2 member 30 (TAS2R30) (Pongo pygmaeus (Bornean orangutan)).